A 550-amino-acid polypeptide reads, in one-letter code: Leiomodin-2 (550 aa).

The segment at 1–47 (MSTFGYRRGLSKYESIDEDELLASLSPEELKELERELEDIEPDRNLP) is interaction with tropomyosin alpha. Interaction with actin stretches follow at residues 1–165 (MSTF…TDNS), 166–500 (KPKT…KEIK), and 524–543 (VHEN…LRRV). 3 positions are modified to phosphoserine: S11, S15, and S24. The segment covering 84-94 (ERLGECGKVAE) has biased composition (basic and acidic residues). Disordered stretches follow at residues 84–202 (ERLG…PCGN) and 359–527 (MDKQ…VHEN). The stretch at 91–147 (KVAEEDKEESEEELIFTESNSEVSEEVCTEDEEESQEEEEDSEEEEDSEEEEETTEA) forms a coiled coil. 2 stretches are compositionally biased toward acidic residues: residues 95-105 (EDKEESEEELI) and 113-145 (VSEE…EETT). 2 stretches are compositionally biased toward polar residues: residues 151 to 164 (INGT…NTDN) and 170 to 193 (FKSQ…NSES). A compositionally biased stretch (basic and acidic residues) spans 359-377 (MDKQRQKRMQEQKQQEGHD). A compositionally biased stretch (polar residues) spans 391–402 (TPGSSPYASPRQ). The residue at position 407 (S407) is a Phosphoserine. Positions 421–452 (PPSPVAPPPPPPPPPLPPHMLPPPPPPPAPPL) are enriched in pro residues. Positions 468–479 (QQESAQRALQNG) are enriched in polar residues. Residues 480 to 490 (QRKKKGKKVKK) are compositionally biased toward basic residues. Positions 497 to 515 (KEIKNSLRSVQEKKMEDSS) are enriched in basic and acidic residues. The region spanning 524–543 (VHENLMEAIRGSSIRQLRRV) is the WH2 domain.

Belongs to the tropomodulin family. In terms of assembly, can bind at least three actin monomers and thereby provides a nucleus for actin filament formation. Interacts (via N-terminus) with tropomyosin alpha (TPM1) (via N-terminus). May also interact with TPM2 (via N-terminus). Interacts with FLII. In terms of tissue distribution, detected in neonate heart (at protein level). Detected in embryonic heart and in pharyngeal arches. Detected in adult heart.

Its subcellular location is the cytoplasm. The protein resides in the myofibril. The protein localises to the sarcomere. It is found in the m line. It localises to the cytoskeleton. Functionally, mediates nucleation of actin filaments and thereby promotes actin polymerization. Plays a role in the regulation of actin filament length. Required for normal sarcomere organization in the heart, and for normal heart function. The sequence is that of Leiomodin-2 (Lmod2) from Mus musculus (Mouse).